Reading from the N-terminus, the 383-residue chain is 8-amino-7-oxononanoate synthase (383 aa).

Residue Arg-20 participates in substrate binding. Pyridoxal 5'-phosphate is bound at residue 107–108; it reads GY. Residue His-132 coordinates substrate. Pyridoxal 5'-phosphate-binding residues include Ser-178, His-206, and Thr-233. The residue at position 236 (Lys-236) is an N6-(pyridoxal phosphate)lysine. Thr-349 is a substrate binding site.

The protein belongs to the class-II pyridoxal-phosphate-dependent aminotransferase family. BioF subfamily. As to quaternary structure, homodimer. It depends on pyridoxal 5'-phosphate as a cofactor.

The enzyme catalyses 6-carboxyhexanoyl-[ACP] + L-alanine + H(+) = (8S)-8-amino-7-oxononanoate + holo-[ACP] + CO2. It functions in the pathway cofactor biosynthesis; biotin biosynthesis. Catalyzes the decarboxylative condensation of pimeloyl-[acyl-carrier protein] and L-alanine to produce 8-amino-7-oxononanoate (AON), [acyl-carrier protein], and carbon dioxide. The sequence is that of 8-amino-7-oxononanoate synthase from Chromobacterium violaceum (strain ATCC 12472 / DSM 30191 / JCM 1249 / CCUG 213 / NBRC 12614 / NCIMB 9131 / NCTC 9757 / MK).